The sequence spans 931 residues: Dual O-methyltransferase/FAD-dependent monooxygenase elcB (931 aa).

The O-methyltransferase stretch occupies residues 1–463; that stretch reads MAASTGLSTV…TTDKARPNGD (463 aa). Residue aspartate 254 participates in S-adenosyl-L-methionine binding. Residue histidine 304 is the Proton acceptor of the active site. Residues 455 to 474 form a disordered region; that stretch reads TDKARPNGDTTHSGQASIPN. The segment covering 462-474 has biased composition (polar residues); the sequence is GDTTHSGQASIPN. The tract at residues 464-931 is FAD-dependent monooxygenase; that stretch reads TTHSGQASIP…TFEELDVAEL (468 aa). Positions 520, 604, 836, and 849 each coordinate FAD.

The protein in the C-terminal section; belongs to the paxM FAD-dependent monooxygenase family. In the N-terminal section; belongs to the class I-like SAM-binding methyltransferase superfamily. Cation-independent O-methyltransferase family. COMT subfamily.

It catalyses the reaction nor-toralactone + S-adenosyl-L-methionine = toralactone + S-adenosyl-L-homocysteine + H(+). It carries out the reaction toralactone + NADH + O2 + H(+) = 1-(3,4,5-trihydroxy-7-methoxynaphthalen-2-yl)propan-2-one + CO2 + NAD(+). It functions in the pathway secondary metabolite biosynthesis. Its function is as follows. Dual O-methyltransferase/FAD-dependent monooxygenase; part of the gene cluster that mediates the biosynthesis of elsinochrome C, a perelyenequinone phytotoxin structurally similar to cercosporin. The first step of elsinochrome C biosynthesis is performed by the polyketide synthase elcA which catalyzes the formation of nor-toralactone. The starter unit acyltransferase (SAT) domain of elcA initiates polyketide extension by the selective utilization of acetyl-CoA, which is elongated to the heptaketide in the beta-ketoacyl synthase (KS) domain by successive condensations with six malonyl units introduced by the malonyl acyltransferase (MAT) domain. The product template (PT) domain catalyzes C4-C9 and C2-C11 aldol cyclizations and dehydrations to a trihydroxynaphthalene, which is thought to be delivered to the thioesterase (TE) domain for product release. The bifunctional enzyme elcB then methylates nor-toralactone to toralactone before conducting an unusual oxidative aromatic ring opening. The next step in perylenequinone biosynthesis is an O-methylation at the nascent OH-6 of the elcB product performed by the O-methyltransferase elcD. The oxidative coupling of the two monomeric naphthol units in perylenequinone biosynthesis is catalyzed by the FAD-dependent monooxygenase elcE and the multicopper oxidase elcG. ElcG might catalyze the first intermolecular coupling in a regio- and stereo-selective manner via a phenol radical coupling mechanism and the elcE could forge the second C-C bond intramolecularly via a hydride transfer mechanism. The fasciclin domain-containing protein elcF might also play a role duting this step. The last piece of the puzzle in the biosynthesis of elsinochrome C is the additional annulation by enolate coupling to afford the dihydrobenzo(ghi)perylenequinone system, catalyzed by the FAD-dependent monooxygenase elcH. The protein is Dual O-methyltransferase/FAD-dependent monooxygenase elcB of Phaeosphaeria nodorum (strain SN15 / ATCC MYA-4574 / FGSC 10173) (Glume blotch fungus).